Consider the following 136-residue polypeptide: MQRFPYSLLLLLLSATNRSRRHHITRPGRSIHWCLVRPTRPNRMLRAIRTCGARYWRNWPLNWPRKAGLTRRSSARIGLSDALRPCPTLFGCFKRRYARQAMSCYCRTEWRVNWLKKKRRGSSRWRRESSVWRCWK.

An N-terminal signal peptide occupies residues 1–21; that stretch reads MQRFPYSLLLLLLSATNRSRR. The RxLR motif lies at 43 to 46; that stretch reads RMLR.

The protein belongs to the RxLR effector family.

Its subcellular location is the secreted. It is found in the host nucleus. Effector that partially suppresses the tobacco programmed cell death induced by cell death-inducing proteins. This Plasmopara viticola (Downy mildew of grapevine) protein is Secreted RxLR effector protein 63.